A 260-amino-acid chain; its full sequence is MQFDVITLFPEMFRALTDWGITSRAAKQQRYALRTWNPRDFTVDNYRTIDDRPYGGGPGMVMLAKPLEDAIDAAAAAQSDAGVGRPHVVLMSPQGATLTHEKVMALSQRPGLVLLCGRYEAIDQRLIDRRVDEEISLGDFVLSGGELPAMALIDAVVRHLPGVLGDAQSAVQDSFVNGLLDCPHYTRPEEYEGVRVPDVLLGGHHAEIEKWRRRQALANTARKRPDLIVAAREQGLLSKADEKFLSELAAKAGQEFAPAK.

Residues Gly117 and 137 to 142 (LGDFVL) each bind S-adenosyl-L-methionine.

The protein belongs to the RNA methyltransferase TrmD family. As to quaternary structure, homodimer.

It is found in the cytoplasm. The catalysed reaction is guanosine(37) in tRNA + S-adenosyl-L-methionine = N(1)-methylguanosine(37) in tRNA + S-adenosyl-L-homocysteine + H(+). Its function is as follows. Specifically methylates guanosine-37 in various tRNAs. This Cupriavidus metallidurans (strain ATCC 43123 / DSM 2839 / NBRC 102507 / CH34) (Ralstonia metallidurans) protein is tRNA (guanine-N(1)-)-methyltransferase.